The following is a 399-amino-acid chain: Guanine nucleotide-binding protein negative regulator 1 (399 aa).

WD repeat units follow at residues 44-83, 105-145, 150-194, 207-247, 252-292, and 296-337; these read KPLNFFHSSRWSPDGSTILSLTEDQCLNCWNVPFSDLSKK, YSYS…NKAS, DHQE…VMTT, SLKG…PCQL, ERGN…DMVY, and GHRG…EETH.

Interacts with gpa1.

It is found in the cytoplasm. Its function is as follows. Negatively regulates the pheromone-response pathway. Acts as a structural mimic of the G protein beta subunit thereby interacting with gpa1 which then inhibits gpa1 signaling. This Schizosaccharomyces pombe (strain 972 / ATCC 24843) (Fission yeast) protein is Guanine nucleotide-binding protein negative regulator 1 (gnr1).